Consider the following 450-residue polypeptide: Enolase (450 aa).

Residue glutamine 173 participates in (2R)-2-phosphoglycerate binding. Glutamate 215 (proton donor) is an active-site residue. Residues aspartate 254, glutamate 308, and aspartate 335 each contribute to the Mg(2+) site. Residues lysine 360, arginine 389, serine 390, and lysine 411 each coordinate (2R)-2-phosphoglycerate. The active-site Proton acceptor is lysine 360.

This sequence belongs to the enolase family. Requires Mg(2+) as cofactor.

The protein resides in the cytoplasm. The protein localises to the secreted. It localises to the cell surface. The enzyme catalyses (2R)-2-phosphoglycerate = phosphoenolpyruvate + H2O. Its pathway is carbohydrate degradation; glycolysis; pyruvate from D-glyceraldehyde 3-phosphate: step 4/5. Its function is as follows. Catalyzes the reversible conversion of 2-phosphoglycerate (2-PG) into phosphoenolpyruvate (PEP). It is essential for the degradation of carbohydrates via glycolysis. This Malacoplasma penetrans (strain HF-2) (Mycoplasma penetrans) protein is Enolase.